Reading from the N-terminus, the 1562-residue chain is NAC-alpha domain-containing protein 1 (1562 aa).

The segment covering 1–13 (MPGEAARAELLLP) has biased composition (low complexity). Disordered regions lie at residues 1–24 (MPGEAARAELLLPEADRPGPRTDL), 56–110 (FLPS…TEAP), 131–226 (SPRA…ADGD), 249–288 (SGWGLSPQGSMVDERELHPAGTPEPPSSESSLSADSSSSW), 327–365 (TPLSPEEEEEEAVADPDPGGDLAGEGEEDSTSASFLQSL), 381–458 (RDDT…GAYL), 503–941 (TPQA…EPLA), and 953–1423 (GCAP…AMSK). The span at 195–208 (GDARDSEAELRDEL) shows a compositional bias: basic and acidic residues. Low complexity predominate over residues 275–287 (SSESSLSADSSSS). Acidic residues predominate over residues 331–340 (PEEEEEEAVA). Low complexity predominate over residues 385 to 397 (SAASSDSDSASYA). 2 stretches are compositionally biased toward polar residues: residues 449–458 (PQTSDRGAYL) and 550–564 (QEETSLTLCPDSPQN). The segment covering 992 to 1007 (PAALDQVQQDDPQPAA) has biased composition (low complexity). A compositionally biased stretch (basic and acidic residues) spans 1048 to 1074 (PGREACLEARAHTGDGAKPDSPQKETL). The residue at position 1068 (Ser-1068) is a Phosphoserine. Low complexity-rich tracts occupy residues 1172 to 1182 (APTSAPTSQQP) and 1231 to 1241 (APGTLAGAALP). Residues 1254–1264 (PQEDSVEDEEP) are compositionally biased toward acidic residues. Composition is skewed to low complexity over residues 1265-1284 (PGSLGLPPPQAGVQPAAAAV), 1298-1308 (SLSPHSPLLSP), and 1335-1344 (QSPAGPQGLS). Acidic residues predominate over residues 1348–1357 (QQEDEDSLEE). Ser-1354 bears the Phosphoserine mark. The NAC-A/B domain occupies 1411–1476 (SRSEKKARKA…AKIEDLSQQV (66 aa)).

Belongs to the NAC-alpha family.

Its subcellular location is the cytoplasm. It is found in the nucleus. Its function is as follows. May prevent inappropriate targeting of non-secretory polypeptides to the endoplasmic reticulum (ER). May bind to nascent polypeptide chains as they emerge from the ribosome and block their interaction with the signal recognition particle (SRP), which normally targets nascent secretory peptides to the ER. May also reduce the inherent affinity of ribosomes for protein translocation sites in the ER membrane (M sites). This is NAC-alpha domain-containing protein 1 (NACAD) from Homo sapiens (Human).